The following is a 551-amino-acid chain: Serine beta-lactamase-like protein LACTB, mitochondrial (551 aa).

Residues 1-113 constitute a mitochondrion transit peptide; that stretch reads MYRLLSSVTA…RAIESSRDLL (113 aa). Residues 69-101 form a disordered region; sequence PADPEASGTTELSHEQALSPGSPHTPAPPAARG. Residue S162 is the Acyl-ester intermediate of the active site. The tract at residues 237–287 is disordered; it reads LKMVKGTPPPSDQEKELKEKGGKNNEKSDAPKAKVEQDSEARCRSAKPGKK. Basic and acidic residues predominate over residues 248–279; sequence DQEKELKEKGGKNNEKSDAPKAKVEQDSEARC. Residues K287 and K288 each carry the N6-succinyllysine modification. An N6-acetyllysine mark is found at K301 and K346.

Belongs to the peptidase S12 family. Expressed predominantly in liver.

Its subcellular location is the mitochondrion. Mitochondrial serine protease that acts as a regulator of mitochondrial lipid metabolism. Acts by decreasing protein levels of PISD, a mitochondrial enzyme that converts phosphatidylserine (PtdSer) to phosphatidylethanolamine (PtdEtn), thereby affecting mitochondrial lipid metabolism. It is unclear whether it acts directly by mediating proteolysis of PISD or by mediating proteolysis of another lipid metabolism protein. Acts as a tumor suppressor that has the ability to inhibit proliferation of multiple types of cancer cells: probably by promoting decreased levels of PISD, thereby affecting mitochondrial lipid metabolism. This is Serine beta-lactamase-like protein LACTB, mitochondrial from Mus musculus (Mouse).